A 265-amino-acid chain; its full sequence is Small ribosomal subunit protein uS2 (265 aa).

The protein belongs to the universal ribosomal protein uS2 family.

In Ligilactobacillus salivarius (strain UCC118) (Lactobacillus salivarius), this protein is Small ribosomal subunit protein uS2.